The chain runs to 248 residues: Probable transcriptional regulatory protein Nham_3525 (248 aa).

A disordered region spans residues 1–21 (MAGHSQFKNIMHRKGRQDAQK).

It belongs to the TACO1 family.

The protein localises to the cytoplasm. This Nitrobacter hamburgensis (strain DSM 10229 / NCIMB 13809 / X14) protein is Probable transcriptional regulatory protein Nham_3525.